A 196-amino-acid chain; its full sequence is Small ribosomal subunit protein uS4c (196 aa).

The tract at residues 16–40 (GALPGLTRKTPKSGSNLKKKFHSGK) is disordered. The 64-residue stretch at 89–152 (MRLDNTLFRL…RSKDLVRNSI (64 aa)) folds into the S4 RNA-binding domain.

This sequence belongs to the universal ribosomal protein uS4 family. In terms of assembly, part of the 30S ribosomal subunit. Contacts protein S5. The interaction surface between S4 and S5 is involved in control of translational fidelity.

The protein localises to the plastid. It is found in the chloroplast. Its function is as follows. One of the primary rRNA binding proteins, it binds directly to 16S rRNA where it nucleates assembly of the body of the 30S subunit. With S5 and S12 plays an important role in translational accuracy. The protein is Small ribosomal subunit protein uS4c (rps4) of Anthoxanthum odoratum (Sweet vernal grass).